A 351-amino-acid polypeptide reads, in one-letter code: C-X-C chemokine receptor type 1 (351 aa).

Topologically, residues 1–44 (MAEAEYFIWTNPEGDFEKEFGNITGMLPTGDYFIPCKRVPITNR) are extracellular. Asn22 carries N-linked (GlcNAc...) asparagine glycosylation. A helical transmembrane segment spans residues 45–71 (QALVVFYALVSLLSLLGNSLVMLVILY). Topologically, residues 72 to 80 (RRRTRSVMD) are cytoplasmic. A helical membrane pass occupies residues 81–101 (VYVLNLAIADLLFSLTLPFLA). Over 102–116 (VSKLKGWIFGTPLCK) the chain is Extracellular. The cysteines at positions 115 and 192 are disulfide-linked. A helical transmembrane segment spans residues 117–138 (MVSLLKEFNFFSGILLLACISV). At 139–159 (DRYLAIVHATRTLARKRYLVK) the chain is on the cytoplasmic side. Residues 160-179 (FVCVGIWGLSLILSLPFAIF) traverse the membrane as a helical segment. At 180-204 (RQAYKPFRSGTVCYEVLGEATTDFR) the chain is on the extracellular side. Residues 205 to 225 (MTLRGLSHIFGFLLPLLTMLV) form a helical membrane-spanning segment. At 226-247 (CYGLTLRMLFKTHMRQKHRAMG) the chain is on the cytoplasmic side. The helical transmembrane segment at 248–269 (VIFAVVLVFLLCCLPYNLVLLS) threads the bilayer. Residues 270–290 (DTLLGAHLIEDTCERRNDIDQ) are Extracellular-facing. Residues 291–313 (ALYITEILGFSHSCLNPIIYAFV) traverse the membrane as a helical segment. Residues 314-351 (GQNFRHEFLKILANHGLVRKEVLTHRRVAFHTSLTAIY) lie on the Cytoplasmic side of the membrane.

It belongs to the G-protein coupled receptor 1 family. As to quaternary structure, interacts with IL8. Interacts with GNAI2.

It localises to the cell membrane. Receptor to interleukin-8, which is a powerful neutrophils chemotactic factor. Binding of IL-8 to the receptor causes activation of neutrophils. This response is mediated via a G-protein that activates a phosphatidylinositol-calcium second messenger system. This chain is C-X-C chemokine receptor type 1 (Cxcr1), found in Mus musculus (Mouse).